Here is a 588-residue protein sequence, read N- to C-terminus: Aspartate--tRNA ligase (588 aa).

Glu174 serves as a coordination point for L-aspartate. Residues 198–201 are aspartate; sequence QLFK. Position 220 (Arg220) interacts with L-aspartate. ATP is bound by residues 220–222 and Gln229; that span reads RDE. His448 lines the L-aspartate pocket. Residue Glu482 coordinates ATP. Arg489 contributes to the L-aspartate binding site. 534–537 contributes to the ATP binding site; sequence GIDR.

This sequence belongs to the class-II aminoacyl-tRNA synthetase family. Type 1 subfamily. Homodimer.

It is found in the cytoplasm. It catalyses the reaction tRNA(Asp) + L-aspartate + ATP = L-aspartyl-tRNA(Asp) + AMP + diphosphate. Catalyzes the attachment of L-aspartate to tRNA(Asp) in a two-step reaction: L-aspartate is first activated by ATP to form Asp-AMP and then transferred to the acceptor end of tRNA(Asp). The polypeptide is Aspartate--tRNA ligase (Xanthomonas campestris pv. campestris (strain 8004)).